We begin with the raw amino-acid sequence, 655 residues long: UvrABC system protein B (655 aa).

The 157-residue stretch at 25–181 (DGINKGEKEQ…IRKLVFMQYE (157 aa)) folds into the Helicase ATP-binding domain. ATP is bound at residue 38-45 (GVTGSGKT). Positions 91–114 (YYDYYQPEAYVPRTDTFIDKESSV) match the Beta-hairpin motif. The region spanning 428-590 (QVEDLLGEVK…IVPKTTKRAL (163 aa)) is the Helicase C-terminal domain. One can recognise a UVR domain in the interval 615–650 (RLLISDLENDMKEAAAKLDFERAASLRDQIATLKGL).

Belongs to the UvrB family. Forms a heterotetramer with UvrA during the search for lesions. Interacts with UvrC in an incision complex.

Its subcellular location is the cytoplasm. Its function is as follows. The UvrABC repair system catalyzes the recognition and processing of DNA lesions. A damage recognition complex composed of 2 UvrA and 2 UvrB subunits scans DNA for abnormalities. Upon binding of the UvrA(2)B(2) complex to a putative damaged site, the DNA wraps around one UvrB monomer. DNA wrap is dependent on ATP binding by UvrB and probably causes local melting of the DNA helix, facilitating insertion of UvrB beta-hairpin between the DNA strands. Then UvrB probes one DNA strand for the presence of a lesion. If a lesion is found the UvrA subunits dissociate and the UvrB-DNA preincision complex is formed. This complex is subsequently bound by UvrC and the second UvrB is released. If no lesion is found, the DNA wraps around the other UvrB subunit that will check the other stand for damage. The chain is UvrABC system protein B from Methanobrevibacter smithii (strain ATCC 35061 / DSM 861 / OCM 144 / PS).